A 158-amino-acid polypeptide reads, in one-letter code: Mitotic-spindle organizing protein 2 (158 aa).

A Phosphoserine modification is found at serine 34. The tract at residues 81–158 (AGQRVASDSQ…PGRSPPRSGT (78 aa)) is disordered. Residues 110 to 119 (KGGGALGGGP) are compositionally biased toward gly residues. A Phosphoserine modification is found at serine 152.

Belongs to the MOZART2 family. Associates with the gamma-tubulin ring complex (gTuRC) consisting of TUBGCP2, TUBGCP3, TUBGCP4, TUBGCP5 and TUBGCP6 and gamma-tubulin TUBG1 or TUBG2; within the complex, interacts with TUBGCP2; the interaction plays a role in gTuRC activation.

Its subcellular location is the cytoplasm. The protein resides in the cytoskeleton. It is found in the microtubule organizing center. It localises to the centrosome. The protein localises to the spindle. Functionally, required for the recruitment and the assembly of the gamma-tubulin ring complex (gTuRC) at the centrosome. The gTuRC regulates the minus-end nucleation of alpha-beta tubulin heterodimers that grow into microtubule protafilaments, a critical step in centrosome duplication and spindle formation. This chain is Mitotic-spindle organizing protein 2 (MZT2), found in Bos taurus (Bovine).